Here is a 316-residue protein sequence, read N- to C-terminus: Glutathione synthetase (316 aa).

The 188-residue stretch at 124-311 folds into the ATP-grasp domain; it reads NEKLAALLFP…IAGLLFDAIE (188 aa). 151–208 is a binding site for ATP; sequence FVLEHGQAVLKPLDGMGGRSIFRSGSGDPNLNVILETLTDGNRKLTLAQRFIPDITAG. Positions 282 and 284 each coordinate Mg(2+).

Belongs to the prokaryotic GSH synthase family. Mg(2+) serves as cofactor. The cofactor is Mn(2+).

The enzyme catalyses gamma-L-glutamyl-L-cysteine + glycine + ATP = glutathione + ADP + phosphate + H(+). Its pathway is sulfur metabolism; glutathione biosynthesis; glutathione from L-cysteine and L-glutamate: step 2/2. In Xanthomonas axonopodis pv. citri (strain 306), this protein is Glutathione synthetase.